Reading from the N-terminus, the 289-residue chain is Mitochondrial fission regulator 1-like (289 aa).

T27 carries the phosphothreonine modification. 8 positions are modified to phosphoserine: S38, S100, S107, S221, S222, S235, S258, and S270.

It belongs to the MTFR1 family. Post-translationally, phosphorylated by AMPK. Upon stress, phosphorylation by AMPK is sufficient to induce mitochondrial fragmentation.

The protein resides in the mitochondrion outer membrane. Mitochondrial protein required for adaptation of miochondrial dynamics to metabolic changes. Regulates mitochondrial morphology at steady state and mediates AMPK-dependent stress-induced mitochondrial fragmentation via the control of OPA1 levels. This chain is Mitochondrial fission regulator 1-like (Mtfr1l), found in Rattus norvegicus (Rat).